The sequence spans 425 residues: Probable mitochondrial import inner membrane translocase subunit tin-44 (425 aa).

Residues 38-149 (FLNNLIDNVR…EHVEKVAEKV (112 aa)) adopt a coiled-coil conformation.

It belongs to the Tim44 family. Probable component of the PAM complex at least composed of a mitochondrial HSP70 protein, GrpE, tin-44, tim-16 and tim-14/dnj-21. The complex interacts with the tim-23 component of the TIM23 complex.

The protein resides in the mitochondrion inner membrane. In terms of biological role, essential component of the PAM complex, a complex required for the translocation of transit peptide-containing proteins from the inner membrane into the mitochondrial matrix in an ATP-dependent manner. Recruits mitochondrial HSP70 to drive protein translocation into the matrix using ATP as an energy source. This is Probable mitochondrial import inner membrane translocase subunit tin-44 from Caenorhabditis elegans.